Consider the following 678-residue polypeptide: Auxin response factor 7 (678 aa).

Residues phenylalanine 128–methionine 230 constitute a DNA-binding region (TF-B3). Disordered regions lie at residues alanine 360–alanine 386 and glycine 502–valine 547. The PB1 domain maps to arginine 548–lysine 641. Residues proline 643–cysteine 678 are disordered.

This sequence belongs to the ARF family. As to quaternary structure, homodimers and heterodimers. In terms of tissue distribution, expressed in roots, culms, leaves and young panicles.

It localises to the nucleus. Auxin response factors (ARFs) are transcriptional factors that bind specifically to the DNA sequence 5'-TGTCTC-3' found in the auxin-responsive promoter elements (AuxREs). This is Auxin response factor 7 (ARF7) from Oryza sativa subsp. japonica (Rice).